The sequence spans 222 residues: Large ribosomal subunit protein uL1 (222 aa).

This sequence belongs to the universal ribosomal protein uL1 family. In terms of assembly, part of the 50S ribosomal subunit.

Functionally, binds directly to 23S rRNA. Probably involved in E site tRNA release. Its function is as follows. Protein L1 is also a translational repressor protein, it controls the translation of its operon by binding to its mRNA. The chain is Large ribosomal subunit protein uL1 from Pyrobaculum aerophilum (strain ATCC 51768 / DSM 7523 / JCM 9630 / CIP 104966 / NBRC 100827 / IM2).